Consider the following 286-residue polypeptide: tRNA (guanine-N(7)-)-methyltransferase (286 aa).

Residues glycine 103, 126–127 (EI), 161–162 (NA), and cysteine 181 contribute to the S-adenosyl-L-methionine site. The active site involves aspartate 184. 259-261 (TEE) contacts S-adenosyl-L-methionine.

It belongs to the class I-like SAM-binding methyltransferase superfamily. TrmB family. As to quaternary structure, forms a complex with TRM82.

It is found in the nucleus. It catalyses the reaction guanosine(46) in tRNA + S-adenosyl-L-methionine = N(7)-methylguanosine(46) in tRNA + S-adenosyl-L-homocysteine. It participates in tRNA modification; N(7)-methylguanine-tRNA biosynthesis. Functionally, catalyzes the formation of N(7)-methylguanine at position 46 (m7G46) in tRNA. The chain is tRNA (guanine-N(7)-)-methyltransferase from Vanderwaltozyma polyspora (strain ATCC 22028 / DSM 70294 / BCRC 21397 / CBS 2163 / NBRC 10782 / NRRL Y-8283 / UCD 57-17) (Kluyveromyces polysporus).